We begin with the raw amino-acid sequence, 58 residues long: MAEIKVKLVRSRIGASPAQRKLLDSLGLKRREMVKTFKDTPAIRGIIAKVPHMVAVVE.

The protein belongs to the universal ribosomal protein uL30 family. In terms of assembly, part of the 50S ribosomal subunit.

The chain is Large ribosomal subunit protein uL30 from Desulfovibrio desulfuricans (strain ATCC 27774 / DSM 6949 / MB).